We begin with the raw amino-acid sequence, 88 residues long: Eclosion hormone (88 aa).

The first 26 residues, 1–26 (MANKLTAVIVVALAVAFMVNLDYANC), serve as a signal peptide directing secretion. 3 disulfides stabilise this stretch: Cys-40–Cys-64, Cys-44–Cys-60, and Cys-47–Cys-75.

Belongs to the insect eclosion hormone family.

It localises to the secreted. Its function is as follows. Neuropeptide that triggers the performance of ecdysis behaviors at the end of a molt. It triggers adult behavior patterns: larval, pupal and adult ecdysis, and plasticization during the molt. This chain is Eclosion hormone, found in Bombyx mori (Silk moth).